The sequence spans 227 residues: Cytochrome c oxidase subunit 2 (227 aa).

Residues 1–14 are Mitochondrial intermembrane-facing; the sequence is MAYPLQMGLQDATS. The chain crosses the membrane as a helical span at residues 15–45; it reads PIMEELLHFHDHTLMIVFLISSLVLYIISLM. Over 46 to 59 the chain is Mitochondrial matrix; it reads LTTKLTHTSTMDAQ. A helical transmembrane segment spans residues 60–87; the sequence is EVETVWTILPAIILILIALPSLRILYMM. Over 88–227 the chain is Mitochondrial intermembrane; it reads DEINNPSLTV…HFEKWSTSML (140 aa). The Cu cation site is built by His-161, Cys-196, Glu-198, Cys-200, His-204, and Met-207. Glu-198 is a Mg(2+) binding site.

The protein belongs to the cytochrome c oxidase subunit 2 family. In terms of assembly, component of the cytochrome c oxidase (complex IV, CIV), a multisubunit enzyme composed of 14 subunits. The complex is composed of a catalytic core of 3 subunits MT-CO1, MT-CO2 and MT-CO3, encoded in the mitochondrial DNA, and 11 supernumerary subunits COX4I, COX5A, COX5B, COX6A, COX6B, COX6C, COX7A, COX7B, COX7C, COX8 and NDUFA4, which are encoded in the nuclear genome. The complex exists as a monomer or a dimer and forms supercomplexes (SCs) in the inner mitochondrial membrane with NADH-ubiquinone oxidoreductase (complex I, CI) and ubiquinol-cytochrome c oxidoreductase (cytochrome b-c1 complex, complex III, CIII), resulting in different assemblies (supercomplex SCI(1)III(2)IV(1) and megacomplex MCI(2)III(2)IV(2)). Found in a complex with TMEM177, COA6, COX18, COX20, SCO1 and SCO2. Interacts with TMEM177 in a COX20-dependent manner. Interacts with COX20. Interacts with COX16. Cu cation is required as a cofactor.

It is found in the mitochondrion inner membrane. The enzyme catalyses 4 Fe(II)-[cytochrome c] + O2 + 8 H(+)(in) = 4 Fe(III)-[cytochrome c] + 2 H2O + 4 H(+)(out). Its function is as follows. Component of the cytochrome c oxidase, the last enzyme in the mitochondrial electron transport chain which drives oxidative phosphorylation. The respiratory chain contains 3 multisubunit complexes succinate dehydrogenase (complex II, CII), ubiquinol-cytochrome c oxidoreductase (cytochrome b-c1 complex, complex III, CIII) and cytochrome c oxidase (complex IV, CIV), that cooperate to transfer electrons derived from NADH and succinate to molecular oxygen, creating an electrochemical gradient over the inner membrane that drives transmembrane transport and the ATP synthase. Cytochrome c oxidase is the component of the respiratory chain that catalyzes the reduction of oxygen to water. Electrons originating from reduced cytochrome c in the intermembrane space (IMS) are transferred via the dinuclear copper A center (CU(A)) of subunit 2 and heme A of subunit 1 to the active site in subunit 1, a binuclear center (BNC) formed by heme A3 and copper B (CU(B)). The BNC reduces molecular oxygen to 2 water molecules using 4 electrons from cytochrome c in the IMS and 4 protons from the mitochondrial matrix. This chain is Cytochrome c oxidase subunit 2 (MT-CO2), found in Halichoerus grypus (Gray seal).